We begin with the raw amino-acid sequence, 101 residues long: Protein Tat (101 aa).

The tract at residues 1 to 24 (MEPVDPNREPWNHPGSQPKTACTN) is interaction with human CREBBP. The interval 1–48 (MEPVDPNREPWNHPGSQPKTACTNCYCKKCCYHCQVCFLQKGLGISYG) is transactivation. Cys-22, Cys-25, and Cys-27 together coordinate Zn(2+). The interval 22–37 (CTNCYCKKCCYHCQVC) is cysteine-rich. Lys-28 carries the N6-acetyllysine; by host PCAF modification. Positions 30, 33, 34, and 37 each coordinate Zn(2+). Positions 38–48 (FLQKGLGISYG) are core. The tract at residues 48-101 (GRKKRRQRRSAPPGSKTHQDLIPKQPLSQTQRKPTGPEESKKEVESKAEPDRFD) is disordered. The Nuclear localization signal, RNA-binding (TAR), and protein transduction motif lies at 49 to 57 (RKKRRQRRS). The interval 49–86 (RKKRRQRRSAPPGSKTHQDLIPKQPLSQTQRKPTGPEE) is interaction with the host capping enzyme RNGTT. N6-acetyllysine; by host EP300 and GCN5L2 is present on residues Lys-50 and Lys-51. An asymmetric dimethylarginine; by host PRMT6 mark is found at Arg-52 and Arg-53. Lys-71 is covalently cross-linked (Glycyl lysine isopeptide (Lys-Gly) (interchain with G-Cter in ubiquitin)). Residues 82 to 101 (TGPEESKKEVESKAEPDRFD) are compositionally biased toward basic and acidic residues.

Belongs to the lentiviruses Tat family. Interacts with host CCNT1. Associates with the P-TEFb complex composed at least of Tat, P-TEFb (CDK9 and CCNT1), TAR RNA, RNA Pol II. Recruits the HATs CREBBP, TAF1/TFIID, EP300, PCAF and GCN5L2. Interacts with host KAT5/Tip60; this interaction targets the latter to degradation. Interacts with the host deacetylase SIRT1. Interacts with host capping enzyme RNGTT; this interaction stimulates RNGTT. Binds to host KDR, and to the host integrins ITGAV/ITGB3 and ITGA5/ITGB1. Interacts with host KPNB1/importin beta-1 without previous binding to KPNA1/importin alpha-1. Interacts with EIF2AK2. Interacts with host nucleosome assembly protein NAP1L1; this interaction may be required for the transport of Tat within the nucleus, since the two proteins interact at the nuclear rim. Interacts with host C1QBP/SF2P32; this interaction involves lysine-acetylated Tat. Interacts with the host chemokine receptors CCR2, CCR3 and CXCR4. Interacts with host DPP4/CD26; this interaction may trigger an anti-proliferative effect. Interacts with host LDLR. Interacts with the host extracellular matrix metalloproteinase MMP1. Interacts with host PRMT6; this interaction mediates Tat's methylation. Interacts with, and is ubiquitinated by MDM2/Hdm2. Interacts with host PSMC3 and HTATIP2. Interacts with STAB1; this interaction may overcome SATB1-mediated repression of IL2 and IL2RA (interleukin) in T cells by binding to the same domain than HDAC1. Interacts (when acetylated) with human CDK13, thereby increasing HIV-1 mRNA splicing and promoting the production of the doubly spliced HIV-1 protein Nef. Interacts with host TBP; this interaction modulates the activity of transcriptional pre-initiation complex. Interacts with host RELA. Interacts with host PLSCR1; this interaction negatively regulates Tat transactivation activity by altering its subcellular distribution. Asymmetrical arginine methylation by host PRMT6 seems to diminish the transactivation capacity of Tat and affects the interaction with host CCNT1. Post-translationally, acetylation by EP300, CREBBP, GCN5L2/GCN5 and PCAF regulates the transactivation activity of Tat. EP300-mediated acetylation of Lys-50 promotes dissociation of Tat from the TAR RNA through the competitive binding to PCAF's bromodomain. In addition, the non-acetylated Tat's N-terminus can also interact with PCAF. PCAF-mediated acetylation of Lys-28 enhances Tat's binding to CCNT1. Lys-50 is deacetylated by SIRT1. In terms of processing, polyubiquitination by host MDM2 does not target Tat to degradation, but activates its transactivation function and fosters interaction with CCNT1 and TAR RNA. Phosphorylated by EIF2AK2 on serine and threonine residues adjacent to the basic region important for TAR RNA binding and function. Phosphorylation of Tat by EIF2AK2 is dependent on the prior activation of EIF2AK2 by dsRNA.

It is found in the host nucleus. Its subcellular location is the host nucleolus. The protein resides in the host cytoplasm. The protein localises to the secreted. Transcriptional activator that increases RNA Pol II processivity, thereby increasing the level of full-length viral transcripts. Recognizes a hairpin structure at the 5'-LTR of the nascent viral mRNAs referred to as the transactivation responsive RNA element (TAR) and recruits the cyclin T1-CDK9 complex (P-TEFb complex) that will in turn hyperphosphorylate the RNA polymerase II to allow efficient elongation. The CDK9 component of P-TEFb and other Tat-activated kinases hyperphosphorylate the C-terminus of RNA Pol II that becomes stabilized and much more processive. Other factors such as HTATSF1/Tat-SF1, SUPT5H/SPT5, and HTATIP2 are also important for Tat's function. Besides its effect on RNA Pol II processivity, Tat induces chromatin remodeling of proviral genes by recruiting the histone acetyltransferases (HATs) CREBBP, EP300 and PCAF to the chromatin. This also contributes to the increase in proviral transcription rate, especially when the provirus integrates in transcriptionally silent region of the host genome. To ensure maximal activation of the LTR, Tat mediates nuclear translocation of NF-kappa-B by interacting with host RELA. Through its interaction with host TBP, Tat may also modulate transcription initiation. Tat can reactivate a latently infected cell by penetrating in it and transactivating its LTR promoter. In the cytoplasm, Tat is thought to act as a translational activator of HIV-1 mRNAs. In terms of biological role, extracellular circulating Tat can be endocytosed by surrounding uninfected cells via the binding to several surface receptors such as CD26, CXCR4, heparan sulfate proteoglycans (HSPG) or LDLR. Neurons are rarely infected, but they internalize Tat via their LDLR. Through its interaction with nuclear HATs, Tat is potentially able to control the acetylation-dependent cellular gene expression. Modulates the expression of many cellular genes involved in cell survival, proliferation or in coding for cytokines or cytokine receptors. Tat plays a role in T-cell and neurons apoptosis. Tat induced neurotoxicity and apoptosis probably contribute to neuroAIDS. Circulating Tat also acts as a chemokine-like and/or growth factor-like molecule that binds to specific receptors on the surface of the cells, affecting many cellular pathways. In the vascular system, Tat binds to ITGAV/ITGB3 and ITGA5/ITGB1 integrins dimers at the surface of endothelial cells and competes with bFGF for heparin-binding sites, leading to an excess of soluble bFGF. This is Protein Tat from Homo sapiens (Human).